The chain runs to 159 residues: Capsid protein (159 aa).

An N-acetylserine; by host modification is found at Ser-2.

It belongs to the virgaviridae capsid protein family.

It is found in the virion. Its function is as follows. Capsid protein self-assembles to form rod-shaped virions about 18 nm in diameter with a central canal enclosing the viral genomic RNA. This Nicotiana tabacum (Common tobacco) protein is Capsid protein (CP).